The following is an 89-amino-acid chain: Small ribosomal subunit protein uS15 (89 aa).

It belongs to the universal ribosomal protein uS15 family. As to quaternary structure, part of the 30S ribosomal subunit. Forms a bridge to the 50S subunit in the 70S ribosome, contacting the 23S rRNA.

Its function is as follows. One of the primary rRNA binding proteins, it binds directly to 16S rRNA where it helps nucleate assembly of the platform of the 30S subunit by binding and bridging several RNA helices of the 16S rRNA. Forms an intersubunit bridge (bridge B4) with the 23S rRNA of the 50S subunit in the ribosome. The sequence is that of Small ribosomal subunit protein uS15 from Kocuria rhizophila (strain ATCC 9341 / DSM 348 / NBRC 103217 / DC2201).